Consider the following 334-residue polypeptide: Galactinol synthase 4 (334 aa).

Lys104 is an active-site residue. Mn(2+)-binding residues include Asp120, Asp122, and His258.

Belongs to the glycosyltransferase 8 family. Galactosyltransferase subfamily. It depends on a divalent metal cation as a cofactor.

The protein localises to the cytoplasm. It catalyses the reaction myo-inositol + UDP-alpha-D-galactose = alpha-D-galactosyl-(1-&gt;3)-1D-myo-inositol + UDP + H(+). Its function is as follows. Galactinol synthase involved in the biosynthesis of raffinose family oligosaccharides (RFOs) that function as osmoprotectants. May promote plant stress tolerance. The polypeptide is Galactinol synthase 4 (GOLS4) (Arabidopsis thaliana (Mouse-ear cress)).